The following is a 321-amino-acid chain: Glutathione synthetase (321 aa).

The region spanning 125–311 is the ATP-grasp domain; sequence EKLFTGWFPH…IAGQFIAFLE (187 aa). Residue 151–208 coordinates ATP; sequence FIREQKEVVIKPLGAMAGESIFYLTVNDPNIPVVIETMTANGHQLVMAQRFIPEVKSG. Residues Glu282 and Asn284 each contribute to the Mg(2+) site.

Belongs to the prokaryotic GSH synthase family. The cofactor is Mg(2+). Mn(2+) serves as cofactor.

The enzyme catalyses gamma-L-glutamyl-L-cysteine + glycine + ATP = glutathione + ADP + phosphate + H(+). It functions in the pathway sulfur metabolism; glutathione biosynthesis; glutathione from L-cysteine and L-glutamate: step 2/2. This chain is Glutathione synthetase, found in Coxiella burnetii (strain RSA 493 / Nine Mile phase I).